The chain runs to 181 residues: Crossover junction endodeoxyribonuclease RuvC (181 aa).

Residues Asp8, Glu67, and Asp139 contribute to the active site. 3 residues coordinate Mg(2+): Asp8, Glu67, and Asp139.

It belongs to the RuvC family. As to quaternary structure, homodimer which binds Holliday junction (HJ) DNA. The HJ becomes 2-fold symmetrical on binding to RuvC with unstacked arms; it has a different conformation from HJ DNA in complex with RuvA. In the full resolvosome a probable DNA-RuvA(4)-RuvB(12)-RuvC(2) complex forms which resolves the HJ. Mg(2+) is required as a cofactor.

It is found in the cytoplasm. The enzyme catalyses Endonucleolytic cleavage at a junction such as a reciprocal single-stranded crossover between two homologous DNA duplexes (Holliday junction).. Its function is as follows. The RuvA-RuvB-RuvC complex processes Holliday junction (HJ) DNA during genetic recombination and DNA repair. Endonuclease that resolves HJ intermediates. Cleaves cruciform DNA by making single-stranded nicks across the HJ at symmetrical positions within the homologous arms, yielding a 5'-phosphate and a 3'-hydroxyl group; requires a central core of homology in the junction. The consensus cleavage sequence is 5'-(A/T)TT(C/G)-3'. Cleavage occurs on the 3'-side of the TT dinucleotide at the point of strand exchange. HJ branch migration catalyzed by RuvA-RuvB allows RuvC to scan DNA until it finds its consensus sequence, where it cleaves and resolves the cruciform DNA. The chain is Crossover junction endodeoxyribonuclease RuvC from Acinetobacter baumannii (strain SDF).